Reading from the N-terminus, the 602-residue chain is Sodium- and chloride-dependent GABA transporter 2 (602 aa).

Residues 1–13 (MDSRVSGTTSNGE) show a composition bias toward polar residues. The interval 1-22 (MDSRVSGTTSNGETKPVYPVME) is disordered. The Cytoplasmic segment spans residues 1–40 (MDSRVSGTTSNGETKPVYPVMEKKEEDGTLERGHWNNKME). 3 consecutive transmembrane segments (helical) span residues 41-61 (FVLSVAGEIIGLGNVWRFPYL), 68-88 (GAFFIPYLVFLFTCGIPVFLL), and 121-141 (IVILLNVYYIIVLAWALFYLF). The Extracellular portion of the chain corresponds to 142 to 206 (SSFTIDLPWG…GIQHLGALRW (65 aa)). C153 and C162 form a disulfide bridge. N-linked (GlcNAc...) asparagine glycosylation is present at N173. Helical transmembrane passes span 207–227 (ELALCLLLAWVICYFCIWKGV) and 233–253 (VVYFTATFPYLMLVVLLIRGV). Residue N269 is glycosylated (N-linked (GlcNAc...) asparagine). 7 consecutive transmembrane segments (helical) span residues 282–302 (AGTQIFFSFAICLGCLTALGS), 319–339 (FLNSGTSFVAGFAIFSILGFM), 366–386 (VVMLPFSPLWACCFFFMVVLL), 418–438 (VLILGVSVVSFLVGLIMLTEG), 453–473 (GMCLLFVAIFESLCVAWVYGA), 490–510 (PLIKYCWLFLTPAVCTATFLF), and 528–548 (WWGDALGWLLALSSMVCIPAW). Residues 549–602 (SLYRLGTLKGPFRERIRQLMCPAEDLPQRNPAGPSAPATPRTSLLRLTELESHC) lie on the Cytoplasmic side of the membrane. T587 carries the phosphothreonine modification. Residue S591 is modified to Phosphoserine.

It belongs to the sodium:neurotransmitter symporter (SNF) (TC 2.A.22) family. SLC6A13 subfamily. In terms of tissue distribution, expressed in brain, kidney, lung, liver and testis.

Its subcellular location is the cell membrane. The protein localises to the basolateral cell membrane. The enzyme catalyses 4-aminobutanoate(out) + chloride(out) + 2 Na(+)(out) = 4-aminobutanoate(in) + chloride(in) + 2 Na(+)(in). The catalysed reaction is taurine(out) + chloride(out) + 2 Na(+)(out) = taurine(in) + chloride(in) + 2 Na(+)(in). It carries out the reaction beta-alanine(out) + chloride(out) + 2 Na(+)(out) = beta-alanine(in) + chloride(in) + 2 Na(+)(in). It catalyses the reaction hypotaurine(out) + chloride(out) + 2 Na(+)(out) = hypotaurine(in) + chloride(in) + 2 Na(+)(in). GABA transport is inhibited by beta-alanine, 2,3-diaminopropionic acid and SNAP-5114. In terms of biological role, mediates sodium- and chloride-dependent transport of gamma-aminobutyric acid (GABA). Mediates transport of beta-alanine. Can also mediate transport of taurine and hypotaurine. In Homo sapiens (Human), this protein is Sodium- and chloride-dependent GABA transporter 2 (SLC6A13).